Consider the following 208-residue polypeptide: MGEPAFTSFPSPPVLGKLKRNMMPWALQKKREIHMAKAHRRRAARSALPMRLTSCIFRRPVTRIRSHPDNQVRRRKGDEHLEKPQQLCAYRRLQALQPCSSQGEGSSPLHLESVLSILAPGTAGESLDRAGAERVRIPLEPTPGRFPAVAGGPTPGMGCQLPPPLSGQLVTPADIRRQARRVKKARERLAKALQADRLARQAEMLTCR.

Belongs to the MBD3L family.

The sequence is that of Methyl-CpG-binding domain protein 3-like 4 (MBD3L4) from Homo sapiens (Human).